The following is a 60-amino-acid chain: MDHRLLEIVACPVCNGRLYFNKEKLELICKVDGLAYPVRDGIPVLLENEARKLGVDEITQ.

It belongs to the UPF0434 family.

The protein is UPF0434 protein PC1_1771 of Pectobacterium carotovorum subsp. carotovorum (strain PC1).